The chain runs to 428 residues: Light-independent protochlorophyllide reductase subunit N (428 aa).

[4Fe-4S] cluster contacts are provided by Cys-29, Cys-54, and Cys-115.

It belongs to the BchN/ChlN family. In terms of assembly, protochlorophyllide reductase is composed of three subunits; BchL, BchN and BchB. Forms a heterotetramer of two BchB and two BchN subunits. Requires [4Fe-4S] cluster as cofactor.

It carries out the reaction chlorophyllide a + oxidized 2[4Fe-4S]-[ferredoxin] + 2 ADP + 2 phosphate = protochlorophyllide a + reduced 2[4Fe-4S]-[ferredoxin] + 2 ATP + 2 H2O. It participates in porphyrin-containing compound metabolism; bacteriochlorophyll biosynthesis (light-independent). In terms of biological role, component of the dark-operative protochlorophyllide reductase (DPOR) that uses Mg-ATP and reduced ferredoxin to reduce ring D of protochlorophyllide (Pchlide) to form chlorophyllide a (Chlide). This reaction is light-independent. The NB-protein (BchN-BchB) is the catalytic component of the complex. In Cereibacter sphaeroides (strain KD131 / KCTC 12085) (Rhodobacter sphaeroides), this protein is Light-independent protochlorophyllide reductase subunit N.